A 1093-amino-acid polypeptide reads, in one-letter code: Protein AF-17 (1093 aa).

The PHD-type 1 zinc-finger motif lies at Val5 to Gln57. The C2HC pre-PHD-type zinc-finger motif lies at Arg62–Val95. Residues Lys118–Phe181 form a PHD-type 2 zinc finger. The tract at residues Lys185–Ser500 is disordered. Residues Ser191–Phe212 show a composition bias toward gly residues. Residues Pro231–Arg255 are compositionally biased toward basic residues. Phosphoserine is present on Ser258. The span at Ser258–Val268 shows a compositional bias: pro residues. Over residues Ser282–Gly300 the composition is skewed to basic and acidic residues. Positions Lys301–Ser316 are enriched in basic residues. A compositionally biased stretch (low complexity) spans Ser317–Gly340. Residues Ala345–Asp354 are compositionally biased toward polar residues. Residues Ala374–Pro388 are compositionally biased toward pro residues. Phosphoserine occurs at positions 378 and 423. A compositionally biased stretch (low complexity) spans Ser410–Gly425. Phosphothreonine is present on Thr451. Basic residues predominate over residues Glu465–Ser484. The interval Leu729–Leu764 is leucine-zipper. Disordered regions lie at residues Val775–Gly871 and Gln1060–Gly1093. Residues Ser787–Ser796 show a composition bias toward low complexity. A compositionally biased stretch (polar residues) spans Gly804–Ser813. Composition is skewed to low complexity over residues Ser818–Ser832 and Leu839–Gly853.

Interacts with histone H3; interaction is necessary for MLLT6 binding to nucleosomes; interaction is inhibited by histone H3 'Lys-27' methylations (H3K27me1, H3K27me2 and H3K27me3).

It localises to the nucleus. This chain is Protein AF-17 (MLLT6), found in Homo sapiens (Human).